A 249-amino-acid chain; its full sequence is METVILFPAIDLKSGQCVRLEQGDMARATVFNLDPVEQARAFAAQGFEYLHVVDLDGAFAGKPVNADAVERVLRNVALPMQLGGGIRDLKTVEAWLGKGVARVIIGTAAVRDPVLVREAAKAFPGRVAVGLDARDGKVAVEGWAETSEVTALDIARRFEDAGIAAIIFTDIARDGLLKGLNLDATIALADSISIPVIASGGFASIADVKALLEPRAKKLAGAISGRALYDGRLDPVEALKLIHAARAAA.

The active-site Proton acceptor is D11. The active-site Proton donor is the D132.

The protein belongs to the HisA/HisF family.

The protein resides in the cytoplasm. The catalysed reaction is 1-(5-phospho-beta-D-ribosyl)-5-[(5-phospho-beta-D-ribosylamino)methylideneamino]imidazole-4-carboxamide = 5-[(5-phospho-1-deoxy-D-ribulos-1-ylimino)methylamino]-1-(5-phospho-beta-D-ribosyl)imidazole-4-carboxamide. It functions in the pathway amino-acid biosynthesis; L-histidine biosynthesis; L-histidine from 5-phospho-alpha-D-ribose 1-diphosphate: step 4/9. This chain is 1-(5-phosphoribosyl)-5-[(5-phosphoribosylamino)methylideneamino] imidazole-4-carboxamide isomerase, found in Nitrobacter winogradskyi (strain ATCC 25391 / DSM 10237 / CIP 104748 / NCIMB 11846 / Nb-255).